We begin with the raw amino-acid sequence, 321 residues long: Polyprenyl transferase cle5 (321 aa).

Helical transmembrane passes span 26 to 46 (PLLATFSGVWATILAGSHKIT), 57 to 77 (VLSQALLCFICSFVFCGAGMV), 107 to 127 (EALVWMAFQFISSWVLVSWML), 132 to 149 (VQAAMLPVTLSTILYPFA), 159 to 179 (IYPQYLLGFTLAYPSLIGTLA), 189 to 209 (LWASINQSLPMFVTVFTWTLY), 232 to 252 (VLAGSYIHHLLVVLAVLVLGA), 262 to 282 (SQWLWGGWMGVWTWSFLGQLV), and 300 to 320 (FALGVWTVFVCVVELLIGGNG).

Belongs to the UbiA prenyltransferase family. Requires Mg(2+) as cofactor.

The protein localises to the membrane. Its pathway is secondary metabolite biosynthesis; terpenoid biosynthesis. Functionally, polyprenyl transferase; part of the cluster A that mediates the biosynthesis of chevalone E and its oxidized derivatives that possess a unique five-membered lactone ring and can synergistically enhance the cytotoxicity of doxorubicin (DOX) in breast cancer cells. Within the pathway, cle5 takes part to the biosynthesis of the molecular scaffold by catalyzing the C-3 geranylgeranylation reaction of triacetic acid lactone (TAL) produced by cle1. The molecular scaffold is commonly biosynthesized by a series of enzymes including the non-reducing polyketide synthase (NR-PKS) cle1 that produces the alpha-pyrone triacetic acid lactone (TAL); The membrane-bound prenyltransferase cle5 that accepts TAL as its substrate to perform a C-3 geranylgeranylation reaction, in which the pathway-dedicated GGPS cle6 is required to provide GGPP, the other substrate of cle5; the FAD-dependent monooxygenase Cle3 that forms an (S)-epoxide ring at the terminal olefin of the geranylgeranyl group; and the terpene cyclase Cle7 that catalyzes the cyclization of the prenyl group that yields the pentacyclic pathway intermediate chevalone E. Chevalone E can derivatize into seven new oxidized analogs by the cytochrome P450 monooxygenases cle2 (acting at C-20) and cle4 (acting at C-11 and C-12). The polypeptide is Polyprenyl transferase cle5 (Aspergillus versicolor).